The primary structure comprises 419 residues: Keratin, type II cytoskeletal I (419 aa).

The linker 1 stretch occupies residues 1 to 16 (KGSTKRANLDPLFEKY). Residues 1-275 (KGSTKRANLD…YMLEGEEGRM (275 aa)) enclose the IF rod domain. A coil 1B region spans residues 17 to 108 (ISDLKRYLDN…TLFAAELSQV (92 aa)). The segment at 109 to 132 (HDQVTDTSVVLTMDNNRDLNLDSI) is linker 12. The segment at 133-271 (IKEVKCQYEQ…STYRYMLEGE (139 aa)) is coil 2. Positions 272–419 (EGRMSGQISN…STTSTTKRSY (148 aa)) are tail.

The protein belongs to the intermediate filament family. In terms of assembly, heterotetramer of two type I and two type II keratins.

The sequence is that of Keratin, type II cytoskeletal I from Xenopus laevis (African clawed frog).